Consider the following 122-residue polypeptide: Small ribosomal subunit protein uS13 (122 aa).

Residues Arg-99 to Lys-122 are disordered.

This sequence belongs to the universal ribosomal protein uS13 family. Part of the 30S ribosomal subunit. Forms a loose heterodimer with protein S19. Forms two bridges to the 50S subunit in the 70S ribosome.

Functionally, located at the top of the head of the 30S subunit, it contacts several helices of the 16S rRNA. In the 70S ribosome it contacts the 23S rRNA (bridge B1a) and protein L5 of the 50S subunit (bridge B1b), connecting the 2 subunits; these bridges are implicated in subunit movement. Contacts the tRNAs in the A and P-sites. The sequence is that of Small ribosomal subunit protein uS13 from Allorhizobium ampelinum (strain ATCC BAA-846 / DSM 112012 / S4) (Agrobacterium vitis (strain S4)).